The sequence spans 1108 residues: TBC1 domain family member 8B (1108 aa).

2 GRAM domains span residues 143–210 and 283–351; these read LRFE…ERTS and QSFR…ELPD. Residues 469 to 656 form the Rab-GAP TBC domain; that stretch reads GVPETLRGEL…NVVDCFFYDG (188 aa). Residues 822–857 enclose the EF-hand domain; the sequence is HSRSLARSAFHLLDENGDGLVNFKEFICGLDILYNR. Residues aspartate 835, asparagine 837, aspartate 839, and glutamate 846 each contribute to the Ca(2+) site. Residues 961–1059 form a disordered region; that stretch reads GRKLQDSSPQ…PTDTPSSPCT (99 aa). Over residues 967–998 the composition is skewed to low complexity; the sequence is SSPQKTPQTTPTSTSQPESSPTKPTSPESETP. The segment covering 1010–1024 has biased composition (polar residues); it reads SPVSQHETAPSHSDI. Over residues 1025-1057 the composition is skewed to low complexity; that stretch reads TPNSTSHPSTPTSSPTETSSPVLDTPTDTPSSP.

It localises to the cytoplasm. The protein resides in the cytosol. Functionally, involved in vesicular recycling, probably as a GTPase-activating protein for Rab family protein(s). The chain is TBC1 domain family member 8B (tbc1d8b) from Danio rerio (Zebrafish).